A 280-amino-acid polypeptide reads, in one-letter code: Mesaconyl-C(4)-CoA hydratase (280 aa).

Belongs to the HTD2 family. In terms of assembly, homodimer.

The enzyme catalyses (3S)-citramalyl-CoA = 3-methylfumaryl-CoA + H2O. Inhibited by 3-methylfumaryl-CoA concentrations above 0.3 mM. Involved in the glyoxylate assimilation cycle used to regenerate acetyl-CoA and produce pyruvate as universal precursor for biosynthesis. Catalyzes the hydration of 3-methylfumaryl-CoA (mesaconyl-C4-CoA) to (3S)-citramalyl-CoA. The chain is Mesaconyl-C(4)-CoA hydratase (meh) from Chloroflexus aurantiacus (strain ATCC 29366 / DSM 635 / J-10-fl).